We begin with the raw amino-acid sequence, 457 residues long: Transcription factor E2F3 (457 aa).

The tract at residues 80 to 171 (LLPSVPGTEP…PKSPSEKTRY (92 aa)) is disordered. Residues 93–102 (SLYTTPQGPS) are compositionally biased toward polar residues. Residues 96–145 (TTPQGPSSRVGLLQQPPAPGRGGGGGPPAKRRLELGESGHQYLSDGLKTP) form a cyclin A/CDK2 binding region. A DNA-binding region spans residues 147 to 237 (GKGRAALRSP…KNNVQWMGCS (91 aa)). Residues 155-164 (SPDSPKTPKS) are compositionally biased toward low complexity. Residues 196 to 217 (LNKAAEVLKVQKRRIYDITNVL) form a leucine-zipper region. Residues 201 to 237 (EVLKVQKRRIYDITNVLEGIHLIKKKSKNNVQWMGCS) carry the DEF box motif. The interval 238 to 329 (LSEDGGMLAQ…VPDSIESLQI (92 aa)) is dimerization. Residues 350 to 387 (HRPMKTNNQDHNGNIPKPTSKDLASNNSGHSDCSVSTA) are disordered. Over residues 371–387 (DLASNNSGHSDCSVSTA) the composition is skewed to polar residues. The interval 383–457 (SVSTANLSPL…LPLVEDFMCS (75 aa)) is transactivation. The segment at 424-441 (EDYLLSLGEEEGISDLFD) is retinoblastoma protein binding.

Belongs to the E2F/DP family. Component of the DRTF1/E2F transcription factor complex. Binds cooperatively with TFDP1/Dp-1 to E2F sites. Interacts with retinoblastoma protein RB1 and related proteins (such as RBL1) that inhibit the E2F transactivation domain. Binds EAPP.

It is found in the nucleus. Its function is as follows. Transcription activator that binds DNA cooperatively with DP proteins through the E2 recognition site, 5'-TTTC[CG]CGC-3' found in the promoter region of a number of genes whose products are involved in cell cycle regulation or in DNA replication. The DRTF1/E2F complex functions in the control of cell-cycle progression from G1 to S phase. E2F3 binds specifically to RB1 in a cell-cycle dependent manner. Inhibits adipogenesis, probably through the repression of CEBPA binding to its target gene promoters. This is Transcription factor E2F3 (E2f3) from Mus musculus (Mouse).